Reading from the N-terminus, the 328-residue chain is Phenylalanine--tRNA ligase alpha subunit (328 aa).

Mg(2+) is bound at residue Glu-245.

Belongs to the class-II aminoacyl-tRNA synthetase family. Phe-tRNA synthetase alpha subunit type 1 subfamily. Tetramer of two alpha and two beta subunits. Mg(2+) is required as a cofactor.

Its subcellular location is the cytoplasm. It catalyses the reaction tRNA(Phe) + L-phenylalanine + ATP = L-phenylalanyl-tRNA(Phe) + AMP + diphosphate + H(+). This chain is Phenylalanine--tRNA ligase alpha subunit, found in Helicobacter acinonychis (strain Sheeba).